A 396-amino-acid chain; its full sequence is MGKAKFERNKPHVNIGTIGHVDHGKTTLTAAITITLAKTGGATAKNYADIDAAPEEKARGITINTAHVEYETPARHYAHVDCPGHADYVKNMITGAAQMDGAILVCSAADGPMPQTREHILLARQVGVPALVVFLNKVDMVDDEELLELVEMEVRELLSSYNFPGDDIPIIKGSALAAVEDRNPEIGQDRILELMKAVDEYIPTPERPLDKPFLMPVEDVFSISGRGTVVTGRVEQGIVKVGEEIEIVGIRPTVKTTCTGVEMFRKLLDQGQAGDNIGALLRGVDREGVERGQVLCKPGSITPHTLFEAEAYILTKEEGGRHTPFFTNYRPQFYFRTTDVTGIVKLPEDKEMVLPGDNVKMDVELINPIAMDKGLRFAIREGGRTVGAGVVSEIKK.

Positions 10–206 (KPHVNIGTIG…AVDEYIPTPE (197 aa)) constitute a tr-type G domain. A G1 region spans residues 19-26 (GHVDHGKT). 19–26 (GHVDHGKT) contributes to the GTP binding site. Thr-26 serves as a coordination point for Mg(2+). A G2 region spans residues 60-64 (GITIN). The interval 81-84 (DCPG) is G3. GTP-binding positions include 81–85 (DCPGH) and 136–139 (NKVD). A G4 region spans residues 136 to 139 (NKVD). The segment at 174–176 (SAL) is G5.

The protein belongs to the TRAFAC class translation factor GTPase superfamily. Classic translation factor GTPase family. EF-Tu/EF-1A subfamily. Monomer.

The protein resides in the cytoplasm. It carries out the reaction GTP + H2O = GDP + phosphate + H(+). In terms of biological role, GTP hydrolase that promotes the GTP-dependent binding of aminoacyl-tRNA to the A-site of ribosomes during protein biosynthesis. The protein is Elongation factor Tu 2 of Hyphomonas neptunium (strain ATCC 15444).